The sequence spans 86 residues: Neurotoxin LmNaTx1 (86 aa).

The N-terminal stretch at 1 to 18 is a signal peptide; the sequence is MKILIIFVIAITVVGVQS. The LCN-type CS-alpha/beta domain maps to 19-85; that stretch reads KDGYPIYSTG…VWTYAENTCG (67 aa). Disulfide bonds link Cys33-Cys84, Cys37-Cys58, Cys44-Cys65, and Cys48-Cys67. A Cysteine amide modification is found at Cys84.

The protein belongs to the long (4 C-C) scorpion toxin superfamily. Sodium channel inhibitor family. Beta subfamily. In terms of tissue distribution, expressed by the venom gland.

It is found in the secreted. Functionally, binds voltage-independently at site-4 of sodium channels (Nav) and shift the voltage of activation toward more negative potentials thereby affecting sodium channel activation and promoting spontaneous and repetitive firing. In Lychas mucronatus (Chinese swimming scorpion), this protein is Neurotoxin LmNaTx1.